The primary structure comprises 552 residues: Lysine--tRNA ligase (552 aa).

The short motif at 72–80 is the 'HIGH' region element; it reads PSGLPHLGT. The short motif at 320–324 is the 'KMSKS' region element; it reads KISKS. K323 is a binding site for ATP.

It belongs to the class-I aminoacyl-tRNA synthetase family.

It is found in the cytoplasm. The enzyme catalyses tRNA(Lys) + L-lysine + ATP = L-lysyl-tRNA(Lys) + AMP + diphosphate. The protein is Lysine--tRNA ligase of Caulobacter vibrioides (strain ATCC 19089 / CIP 103742 / CB 15) (Caulobacter crescentus).